The sequence spans 214 residues: 3-isopropylmalate dehydratase small subunit (214 aa).

Belongs to the LeuD family. LeuD type 1 subfamily. In terms of assembly, heterodimer of LeuC and LeuD.

The enzyme catalyses (2R,3S)-3-isopropylmalate = (2S)-2-isopropylmalate. It functions in the pathway amino-acid biosynthesis; L-leucine biosynthesis; L-leucine from 3-methyl-2-oxobutanoate: step 2/4. Functionally, catalyzes the isomerization between 2-isopropylmalate and 3-isopropylmalate, via the formation of 2-isopropylmaleate. The protein is 3-isopropylmalate dehydratase small subunit of Pseudomonas fluorescens (strain ATCC BAA-477 / NRRL B-23932 / Pf-5).